We begin with the raw amino-acid sequence, 392 residues long: Methylthioribose kinase (392 aa).

ATP contacts are provided by residues N38, K53, and 107 to 109; that span reads EDL. Substrate is bound at residue D225. 242–244 contributes to the ATP binding site; it reads DPE. R332 contacts substrate.

The protein belongs to the methylthioribose kinase family. As to quaternary structure, homodimer.

It catalyses the reaction 5-(methylsulfanyl)-D-ribose + ATP = 5-(methylsulfanyl)-alpha-D-ribose 1-phosphate + ADP + H(+). The protein operates within amino-acid biosynthesis; L-methionine biosynthesis via salvage pathway; S-methyl-5-thio-alpha-D-ribose 1-phosphate from S-methyl-5'-thioadenosine (hydrolase route): step 2/2. Catalyzes the phosphorylation of methylthioribose into methylthioribose-1-phosphate. This Bacillus mycoides (strain KBAB4) (Bacillus weihenstephanensis) protein is Methylthioribose kinase.